Reading from the N-terminus, the 469-residue chain is uncharacterized protein (469 aa).

This is an uncharacterized protein from Treponema pallidum (strain Nichols).